We begin with the raw amino-acid sequence, 213 residues long: Leucine-rich repeat protein 1 (213 aa).

Residues 1 to 21 (MGAGALGVVAMVAAAVVVAMA) form the signal peptide. 4 LRR repeats span residues 90–113 (DHLQ…LGNL), 115–137 (NLIS…LGKL), 138–161 (TSLV…LAGI), and 163–186 (SLKV…PFEH).

As to quaternary structure, interacts with HIR1.

Its subcellular location is the early endosome membrane. It is found in the late endosome membrane. The protein localises to the cell membrane. Its function is as follows. Involved in plant defense response. In Oryza sativa subsp. indica (Rice), this protein is Leucine-rich repeat protein 1.